A 319-amino-acid chain; its full sequence is Lambda-crystallin (319 aa).

Ala2 bears the N-acetylalanine mark. Ser3 is modified (phosphoserine). Residues 16–17 (LV), Asp36, Glu97, and Lys102 each bind NAD(+). Ser111 bears the Phosphoserine mark.

This sequence belongs to the 3-hydroxyacyl-CoA dehydrogenase family. In terms of assembly, homodimer. In terms of tissue distribution, detected in eye lens, kidney, liver, heart, lung, brain and testis.

It localises to the cytoplasm. The catalysed reaction is L-gulonate + NAD(+) = 3-dehydro-L-gulonate + NADH + H(+). Its activity is regulated as follows. Inhibited by malonate and by inorganic phosphate. Functions as a crystallin in the rabbit eye lens. Has high L-gulonate 3-dehydrogenase activity. It also exhibits low dehydrogenase activity toward L-3-hydroxybutyrate (HBA) and L-threonate. This is Lambda-crystallin (CRYL1) from Oryctolagus cuniculus (Rabbit).